The following is a 375-amino-acid chain: 4,4'-diaponeurosporenoate glycosyltransferase (375 aa).

The next 4 membrane-spanning stretches (helical) occupy residues 7–23 (LLHA…YLMY), 112–132 (ACYL…DADV), 280–300 (IMML…GLAL), and 333–353 (FSIL…LVYI).

The protein belongs to the glycosyltransferase 2 family. CrtQ subfamily.

The protein resides in the cell membrane. Its pathway is carotenoid biosynthesis; staphyloxanthin biosynthesis; staphyloxanthin from farnesyl diphosphate: step 4/5. Functionally, catalyzes the glycosylation of 4,4'-diaponeurosporenoate, i.e. the esterification of glucose at the C1'' position with the carboxyl group of 4,4'-diaponeurosporenic acid, to form glycosyl-4,4'-diaponeurosporenoate. This is a step in the biosynthesis of staphyloxanthin, an orange pigment present in most staphylococci strains. This is 4,4'-diaponeurosporenoate glycosyltransferase (crtQ) from Staphylococcus haemolyticus (strain JCSC1435).